Consider the following 154-residue polypeptide: Large ribosomal subunit protein uL13 (154 aa).

The protein belongs to the universal ribosomal protein uL13 family. In terms of assembly, part of the 50S ribosomal subunit.

Functionally, this protein is one of the early assembly proteins of the 50S ribosomal subunit, although it is not seen to bind rRNA by itself. It is important during the early stages of 50S assembly. The protein is Large ribosomal subunit protein uL13 of Bradyrhizobium sp. (strain BTAi1 / ATCC BAA-1182).